The sequence spans 873 residues: Kinase suppressor of Ras 1 (873 aa).

3 disordered regions span residues methionine 1–alanine 24, glutamate 174–serine 230, and leucine 251–lysine 281. Residues methionine 1–glycine 170 are mediates association with membranes. Over residues alanine 206–valine 216 the composition is skewed to polar residues. Threonine 256 and threonine 260 each carry phosphothreonine. Serine 297 bears the Phosphoserine; by MARK3 mark. At serine 320 the chain carries Phosphoserine. Residues threonine 333–cysteine 377 form a Phorbol-ester/DAG-type zinc finger. Zn(2+) is bound at residue histidine 334. Serine 337 bears the Phosphoserine mark. 7 residues coordinate Zn(2+): cysteine 346, cysteine 349, cysteine 359, cysteine 362, histidine 367, cysteine 370, and cysteine 377. Phosphoserine; by MARK3 is present on serine 392. Threonine 411 bears the Phosphothreonine mark. Disordered stretches follow at residues leucine 416 to phenylalanine 473 and histidine 506 to arginine 544. Positions serine 429 to threonine 458 are enriched in low complexity. Positions histidine 506–glutamate 519 are enriched in basic and acidic residues. Serine 518 carries the post-translational modification Phosphoserine. Positions alanine 520–aspartate 530 are enriched in acidic residues. A Protein kinase domain is found at valine 563–leucine 833. ATP is bound at residue isoleucine 569–valine 577. Catalysis depends on aspartate 683, which acts as the Proton acceptor. The ATP site is built by lysine 685 and aspartate 700. Serine 838 carries the post-translational modification Phosphoserine.

This sequence belongs to the protein kinase superfamily. TKL Ser/Thr protein kinase family. In terms of assembly, homodimer. Heterodimerizes (via N-terminus) with BRAF (via N-terminus) in a MAP2K1/MEK1 or MAP2K2/MEK2-dependent manner. Interacts with MAP2K1/MEK1 and MAP2K2/MEK2. Binding to MAP2K1/MEK1 releases the intramolecular inhibitory interaction between KSR1 N-terminus and kinase domains which is required for the subsequent RSK1 dimerization with BRAF. Identified in a complex with AKAP13, MAP2K1 and BRAF. Interacts with AKAP13 and BRAF. Interacts with RAF and MAPK/ERK, in a Ras-dependent manner. Interacts with 14-3-3 proteins including YWHAB. Interacts with HSP90AA1/HSP90, YWHAE/14-3-3 and CDC37. The binding of 14-3-3 proteins to phosphorylated KSR1 prevents the membrane localization. Interacts with MARK3/C-TAK1. Interacts with PPP2R1A and PPP2CA. Interacts with VRK2. Phosphorylated on Ser-297 and, to a higher extent, on Ser-392 by MARK3. Dephosphorylated on Ser-392 by PPP2CA. Phosphorylated KSR1 is cytoplasmic and dephosphorylated KSR1 is membrane-associated. Phosphorylated by PKA at Ser-838. Phosphorylation at Ser-838 is required for cAMP-dependent activation of MAPK1 and/or MAPK3. In terms of tissue distribution, expressed in brain, spleen and testis. Isoform 1 is highly expressed spleen and weakly in testis, and isoform 2 is highly expressed in brain and weakly in testis.

It is found in the cytoplasm. Its subcellular location is the membrane. The protein resides in the cell membrane. It localises to the cell projection. The protein localises to the ruffle membrane. It is found in the endoplasmic reticulum membrane. The catalysed reaction is L-seryl-[protein] + ATP = O-phospho-L-seryl-[protein] + ADP + H(+). The enzyme catalyses L-threonyl-[protein] + ATP = O-phospho-L-threonyl-[protein] + ADP + H(+). Its function is as follows. Part of a multiprotein signaling complex which promotes phosphorylation of Raf family members and activation of downstream MAP kinases. Independently of its kinase activity, acts as MAP2K1/MEK1 and MAP2K2/MEK2-dependent allosteric activator of BRAF; upon binding to MAP2K1/MEK1 or MAP2K2/MEK2, dimerizes with BRAF and promotes BRAF-mediated phosphorylation of MAP2K1/MEK1 and/or MAP2K2/MEK2. Promotes activation of MAPK1 and/or MAPK3, both in response to EGF and to cAMP. Its kinase activity is unsure. Some protein kinase activity has been detected in vitro, however the physiological relevance of this activity is unknown. The protein is Kinase suppressor of Ras 1 (Ksr1) of Mus musculus (Mouse).